The sequence spans 1534 residues: DNA-directed RNA polymerase subunit beta'' (1534 aa).

Cys-220, Cys-296, Cys-303, and Cys-306 together coordinate Zn(2+). Composition is skewed to basic and acidic residues over residues Arg-644 to Glu-668 and Pro-678 to Glu-688. Disordered stretches follow at residues Arg-644 to Tyr-698 and Tyr-719 to Gly-800. Composition is skewed to acidic residues over residues Gly-744 to Asp-762 and Thr-770 to Ser-789.

It belongs to the RNA polymerase beta' chain family. RpoC2 subfamily. As to quaternary structure, in plastids the minimal PEP RNA polymerase catalytic core is composed of four subunits: alpha, beta, beta', and beta''. When a (nuclear-encoded) sigma factor is associated with the core the holoenzyme is formed, which can initiate transcription. Requires Zn(2+) as cofactor.

The protein resides in the plastid. It is found in the chloroplast. The catalysed reaction is RNA(n) + a ribonucleoside 5'-triphosphate = RNA(n+1) + diphosphate. DNA-dependent RNA polymerase catalyzes the transcription of DNA into RNA using the four ribonucleoside triphosphates as substrates. The chain is DNA-directed RNA polymerase subunit beta'' from Saccharum officinarum (Sugarcane).